We begin with the raw amino-acid sequence, 857 residues long: Putative disease resistance protein At1g50180 (857 aa).

The stretch at 27-60 (IGDQVKQLQDELKRLNCFLKDADEKQHESERVRN) forms a coiled coil. Positions 148 to 461 (SLREQRQSFP…AEGMVMPVKH (314 aa)) constitute an NB-ARC domain. 192–199 (GMGGLGKT) contributes to the ATP binding site. LRR repeat units follow at residues 653–678 (MTSL…SLSK), 680–703 (LKRL…DVTQ), 754–780 (LPNL…NLEN), and 791–816 (MMRL…RFLK).

Belongs to the disease resistance NB-LRR family.

Its function is as follows. Potential disease resistance protein. The polypeptide is Putative disease resistance protein At1g50180 (Arabidopsis thaliana (Mouse-ear cress)).